We begin with the raw amino-acid sequence, 430 residues long: Adenylosuccinate synthetase (430 aa).

Residues 12-18 (GDEGKGK) and 40-42 (GHT) contribute to the GTP site. Catalysis depends on aspartate 13, which acts as the Proton acceptor. Mg(2+) is bound by residues aspartate 13 and glycine 40. IMP is bound by residues 13–16 (DEGK), 38–41 (NAGH), threonine 129, arginine 143, glutamine 224, threonine 239, and arginine 303. Histidine 41 serves as the catalytic Proton donor. Substrate is bound at residue 299 to 305 (TVSNRKR). GTP contacts are provided by residues arginine 305, 331–333 (KLD), and 413–415 (STG).

The protein belongs to the adenylosuccinate synthetase family. In terms of assembly, homodimer. Mg(2+) serves as cofactor.

It is found in the cytoplasm. It catalyses the reaction IMP + L-aspartate + GTP = N(6)-(1,2-dicarboxyethyl)-AMP + GDP + phosphate + 2 H(+). It functions in the pathway purine metabolism; AMP biosynthesis via de novo pathway; AMP from IMP: step 1/2. Its function is as follows. Plays an important role in the de novo pathway of purine nucleotide biosynthesis. Catalyzes the first committed step in the biosynthesis of AMP from IMP. This is Adenylosuccinate synthetase from Ehrlichia chaffeensis (strain ATCC CRL-10679 / Arkansas).